We begin with the raw amino-acid sequence, 317 residues long: Insulin-like growth factor-binding protein 2 (317 aa).

Residues 1 to 33 (MQPRLGGPALLLLPPLLLLLLLGAGGGDCGARA) form the signal peptide. One can recognise an IGFBP N-terminal domain in the interval 35 to 126 (VLFRCPPCTP…VHGEGTCEKH (92 aa)). 6 disulfides stabilise this stretch: cysteine 39-cysteine 76, cysteine 42-cysteine 78, cysteine 50-cysteine 79, cysteine 68-cysteine 82, cysteine 90-cysteine 103, and cysteine 97-cysteine 123. Disordered stretches follow at residues 125–151 (KHGD…GGQV) and 189–218 (EQHR…ARTP). Residues 216–298 (RTPCQQELDQ…APTIRGDPEC (83 aa)) form the Thyroglobulin type-1 domain. Cystine bridges form between cysteine 219–cysteine 253, cysteine 264–cysteine 275, and cysteine 277–cysteine 298. Residues 293–295 (RGD) carry the Cell attachment site motif.

In terms of assembly, interacts with IGF1. Interacts with IGF2. Interacts (via RGD motif) with integrin alpha5/ITGA5; this interaction induces cell migration, adhesion or apoptosis according to the context. Interacts with PTPRB; this interaction leads to PTPRB dimerization and inactivation. Post-translationally, cleaved by MMP9 leading to release of free IGF2 from IGFBP2-IGF2 complex, which contributes to enhance the motility and the growth of astrocytes. O-glycosylated. As to expression, expressed in abundance in selected adult tissues, namely liver, kidney, adrenal, pituitary and choroid plexus.

The protein resides in the secreted. In terms of biological role, multifunctional protein that plays a critical role in regulating the availability of IGFs such as IGF1 and IGF2 to their receptors and thereby regulates IGF-mediated cellular processes including proliferation, differentiation, and apoptosis in a cell-type specific manner. Functions coordinately with receptor protein tyrosine phosphatase beta/PTPRB and the IGF1 receptor to regulate IGF1-mediated signaling by stimulating the phosphorylation of PTEN leading to its inactivation and AKT1 activation. Plays a positive role in cell migration via interaction with integrin alpha5/ITGA5 through an RGD motif. Additionally, interaction with ITGA5/ITGB1 enhances the adhesion of endothelial progenitor cells to endothelial cells. Upon mitochondrial damage, facilitates apoptosis with ITGA5 of podocytes, and then activates the phosphorylation of focal adhesion kinase (FAK)-mediated mitochondrial injury. The polypeptide is Insulin-like growth factor-binding protein 2 (IGFBP2) (Ovis aries (Sheep)).